The primary structure comprises 139 residues: Arsenate reductase (139 aa).

Residues Cys-10, Cys-82, and Cys-89 each act as nucleophile in the active site. 2 disulfide bridges follow: Cys-10/Cys-82 and Cys-82/Cys-89.

Belongs to the low molecular weight phosphotyrosine protein phosphatase family. Thioredoxin-coupled ArsC subfamily.

It is found in the cytoplasm. The enzyme catalyses arsenate + [thioredoxin]-dithiol + H(+) = arsenite + [thioredoxin]-disulfide + H2O. Functionally, catalyzes the reduction of arsenate [As(V)] to arsenite [As(III)]. This is Arsenate reductase from Shouchella clausii (strain KSM-K16) (Alkalihalobacillus clausii).